We begin with the raw amino-acid sequence, 209 residues long: FK506-binding protein 2B (209 aa).

The first 19 residues, 1-19 (MRFSLLALLGTIVATSVSA), serve as a signal peptide directing secretion. The region spanning 47–136 (GDELSMHYTG…VFEVELLEIK (90 aa)) is the PPIase FKBP-type domain. The helical transmembrane segment at 157 to 177 (FTSPSFLVSTGIIVALFLIVF) threads the bilayer. Positions 178–207 (KMAKKQDIAEANEKAAAATAEASTEKKEEK) form a coiled coil. The tract at residues 190 to 209 (EKAAAATAEASTEKKEEKKE) is disordered. The span at 200–209 (STEKKEEKKE) shows a compositional bias: basic and acidic residues.

The protein belongs to the FKBP-type PPIase family. FKBP2 subfamily.

The protein localises to the membrane. The catalysed reaction is [protein]-peptidylproline (omega=180) = [protein]-peptidylproline (omega=0). Its activity is regulated as follows. Inhibited by both FK506 and rapamycin. PPIases accelerate the folding of proteins. It catalyzes the cis-trans isomerization of proline imidic peptide bonds in oligopeptides. This is FK506-binding protein 2B (FKBP3) from Rhizopus delemar (strain RA 99-880 / ATCC MYA-4621 / FGSC 9543 / NRRL 43880) (Mucormycosis agent).